We begin with the raw amino-acid sequence, 508 residues long: MALGRPSYRGGRVSGGRDPDFAELSSSLEQDREIFHCDVWNSVVHAVSLWEAGRIDRSTAAGIVEGLVTVLEEGPDRLPEDAEDVHEAIESRLHEVVGEEAGWLQLGRSRNDQVATSVRMRLRERALDLSRELVGLGRALLDLAREHAEVPIAGYTHLKRAQPCTIGFWMSTYAAAVARSARGLLRVPGMDECPLGCSAFPGSTVPVDRHREAALLGFRKPARHCGEATALRGPILEFLGRLATAASELTRLAGDLIQLCSDELGVVEPPDELSSTSSVMPHKKNPDALELVRAELTVVAGLKGLGDAVHGKLPMFYNRDLQVLNGLLWDSVNRFELCVRVLRKVVEGLDVDEEAARGTVLGSHAAAVDLAELVAERAGLTFREAHKVVGRVSARLDREGVPMSPERADRVVEELEREGVKLRVEEVREVLSLKRTLRRPVEGSTDPGRLEVTLDRLRAELAAAERLEGTWRGRIERALRATEAAVNRLGVEGFAEVYRGYWDGEAPG.

This sequence belongs to the lyase 1 family. Argininosuccinate lyase subfamily.

It is found in the cytoplasm. It catalyses the reaction 2-(N(omega)-L-arginino)succinate = fumarate + L-arginine. The protein operates within amino-acid biosynthesis; L-arginine biosynthesis; L-arginine from L-ornithine and carbamoyl phosphate: step 3/3. The chain is Argininosuccinate lyase from Methanopyrus kandleri (strain AV19 / DSM 6324 / JCM 9639 / NBRC 100938).